Consider the following 287-residue polypeptide: F-actin-capping protein subunit beta (287 aa).

At serine 2 the chain carries N-acetylserine. 2 positions are modified to phosphoserine: serine 85 and serine 92.

Belongs to the F-actin-capping protein beta subunit family. In terms of assembly, component of the F-actin capping complex, composed of a heterodimer of an alpha and a beta subunit. Interacts with BSP1 (via C-terminus); leading to recruitment of the F-actin capping complex to actin cortical patches and the acomyosin contractile ring.

The protein resides in the cytoplasm. It is found in the cytoskeleton. It localises to the actin patch. Its subcellular location is the bud. The protein localises to the bud tip. Functionally, F-actin-capping proteins bind in a Ca(2+)-independent manner to the fast growing ends of actin filaments (barbed end) thereby blocking the exchange of subunits at these ends. Unlike other capping proteins (such as gelsolin and severin), these proteins do not sever actin filaments. The polypeptide is F-actin-capping protein subunit beta (CAP2) (Saccharomyces cerevisiae (strain ATCC 204508 / S288c) (Baker's yeast)).